The primary structure comprises 210 residues: HTH-type transcriptional repressor FabR (210 aa).

The 61-residue stretch at 10-70 (KTRRSLVEAA…TMVDESGLML (61 aa)) folds into the HTH tetR-type domain. The segment at residues 33–52 (SLREVAREAGIAPTSFYRHF) is a DNA-binding region (H-T-H motif).

As to quaternary structure, homodimer.

Its subcellular location is the cytoplasm. Functionally, represses the transcription of fabB, involved in unsaturated fatty acid (UFA) biosynthesis. By controlling UFA production, FabR directly influences the physical properties of the membrane bilayer. The polypeptide is HTH-type transcriptional repressor FabR (Salmonella paratyphi A (strain ATCC 9150 / SARB42)).